Consider the following 283-residue polypeptide: MGEILDGKKLARELGEKLGSEVDSLKEHGVSPKLCVINIGDDPASKVYVASKKRKAEKLGIKQVVYQLPADESEEDVLKLIDSLNADPEVSSLMVQLPVPPQINADRVIERIDPEKDVDCLTPANIGRLWQGKHFVEPATAAGIIALLDHYQIDLTGKNAVIVGRSNIVGKPLAALMLERNASVSILHSRSRNLADLTKQADILVCAVGKAEMIKADMVKEGAVVIDVGINRVDGHLVGDVDFAPVKEKASWITPVPGGVGPLTVEFLMEEVIKLTRRQHGLD.

NADP(+) contacts are provided by residues 164–166 (GRS), S189, and I230.

This sequence belongs to the tetrahydrofolate dehydrogenase/cyclohydrolase family. Homodimer.

It catalyses the reaction (6R)-5,10-methylene-5,6,7,8-tetrahydrofolate + NADP(+) = (6R)-5,10-methenyltetrahydrofolate + NADPH. It carries out the reaction (6R)-5,10-methenyltetrahydrofolate + H2O = (6R)-10-formyltetrahydrofolate + H(+). The protein operates within one-carbon metabolism; tetrahydrofolate interconversion. Its function is as follows. Catalyzes the oxidation of 5,10-methylenetetrahydrofolate to 5,10-methenyltetrahydrofolate and then the hydrolysis of 5,10-methenyltetrahydrofolate to 10-formyltetrahydrofolate. The protein is Bifunctional protein FolD of Lactobacillus delbrueckii subsp. bulgaricus (strain ATCC BAA-365 / Lb-18).